The sequence spans 109 residues: MSAQPVDLQIFGRSLRVNCPPEQQDALNLAAEDLNQRLQDLKVRTRVTNTEQLVFIAALNICHELAQEKSKTRDYASNMEQRIRMLQQTIEQALLEQGRITERTGTNFE.

A coiled-coil region spans residues 22-99 (EQQDALNLAA…IEQALLEQGR (78 aa)).

Belongs to the ZapA family. Type 1 subfamily. As to quaternary structure, homodimer. Interacts with FtsZ.

It is found in the cytoplasm. In terms of biological role, activator of cell division through the inhibition of FtsZ GTPase activity, therefore promoting FtsZ assembly into bundles of protofilaments necessary for the formation of the division Z ring. It is recruited early at mid-cell but it is not essential for cell division. The protein is Cell division protein ZapA of Erwinia tasmaniensis (strain DSM 17950 / CFBP 7177 / CIP 109463 / NCPPB 4357 / Et1/99).